The chain runs to 160 residues: SsrA-binding protein (160 aa).

Belongs to the SmpB family.

It localises to the cytoplasm. Functionally, required for rescue of stalled ribosomes mediated by trans-translation. Binds to transfer-messenger RNA (tmRNA), required for stable association of tmRNA with ribosomes. tmRNA and SmpB together mimic tRNA shape, replacing the anticodon stem-loop with SmpB. tmRNA is encoded by the ssrA gene; the 2 termini fold to resemble tRNA(Ala) and it encodes a 'tag peptide', a short internal open reading frame. During trans-translation Ala-aminoacylated tmRNA acts like a tRNA, entering the A-site of stalled ribosomes, displacing the stalled mRNA. The ribosome then switches to translate the ORF on the tmRNA; the nascent peptide is terminated with the 'tag peptide' encoded by the tmRNA and targeted for degradation. The ribosome is freed to recommence translation, which seems to be the essential function of trans-translation. The polypeptide is SsrA-binding protein (Zymomonas mobilis subsp. mobilis (strain ATCC 31821 / ZM4 / CP4)).